Consider the following 382-residue polypeptide: Lipoyl synthase, mitochondrial (382 aa).

Residues 1 to 30 (MHGRRHLAASLARALTYAPSRSISSTPSLL) constitute a mitochondrion transit peptide. Positions 25 to 34 (STPSLLQTLD) are enriched in polar residues. The interval 25-47 (STPSLLQTLDPSTPSPAAAPPTA) is disordered. Residues Cys112, Cys117, Cys123, Cys143, Cys147, Cys150, and Ser359 each contribute to the [4Fe-4S] cluster site. Residues 128–348 (ETGTATATIM…RSLGVDMGFR (221 aa)) enclose the Radical SAM core domain.

This sequence belongs to the radical SAM superfamily. Lipoyl synthase family. [4Fe-4S] cluster is required as a cofactor.

The protein localises to the mitochondrion. The catalysed reaction is [[Fe-S] cluster scaffold protein carrying a second [4Fe-4S](2+) cluster] + N(6)-octanoyl-L-lysyl-[protein] + 2 oxidized [2Fe-2S]-[ferredoxin] + 2 S-adenosyl-L-methionine + 4 H(+) = [[Fe-S] cluster scaffold protein] + N(6)-[(R)-dihydrolipoyl]-L-lysyl-[protein] + 4 Fe(3+) + 2 hydrogen sulfide + 2 5'-deoxyadenosine + 2 L-methionine + 2 reduced [2Fe-2S]-[ferredoxin]. It functions in the pathway protein modification; protein lipoylation via endogenous pathway; protein N(6)-(lipoyl)lysine from octanoyl-[acyl-carrier-protein]: step 2/2. Catalyzes the radical-mediated insertion of two sulfur atoms into the C-6 and C-8 positions of the octanoyl moiety bound to the lipoyl domains of lipoate-dependent enzymes, thereby converting the octanoylated domains into lipoylated derivatives. The sequence is that of Lipoyl synthase, mitochondrial from Oryza sativa subsp. indica (Rice).